The following is a 236-amino-acid chain: uncharacterized protein (236 aa).

To M.tuberculosis Rv2557.

This is an uncharacterized protein from Mycobacterium tuberculosis (strain CDC 1551 / Oshkosh).